The sequence spans 272 residues: Shikimate dehydrogenase (NADP(+)) (272 aa).

Shikimate-binding positions include 14 to 16 and threonine 61; that span reads SKS. The Proton acceptor role is filled by lysine 65. Glutamate 77 contacts NADP(+). The shikimate site is built by asparagine 86 and aspartate 102. Residues 126 to 130, 149 to 154, and methionine 213 contribute to the NADP(+) site; these read GAGGA and NRTVSR. Tyrosine 215 is a shikimate binding site. An NADP(+)-binding site is contributed by glycine 237.

Belongs to the shikimate dehydrogenase family. As to quaternary structure, homodimer.

It catalyses the reaction shikimate + NADP(+) = 3-dehydroshikimate + NADPH + H(+). The protein operates within metabolic intermediate biosynthesis; chorismate biosynthesis; chorismate from D-erythrose 4-phosphate and phosphoenolpyruvate: step 4/7. Its function is as follows. Involved in the biosynthesis of the chorismate, which leads to the biosynthesis of aromatic amino acids. Catalyzes the reversible NADPH linked reduction of 3-dehydroshikimate (DHSA) to yield shikimate (SA). The sequence is that of Shikimate dehydrogenase (NADP(+)) from Escherichia coli O139:H28 (strain E24377A / ETEC).